We begin with the raw amino-acid sequence, 298 residues long: Glutamate/glycine mitochondrial carrier ymc1 (298 aa).

Solcar repeat units lie at residues T14–F98, V106–N193, and T206–H294. Helical transmembrane passes span F17 to V37, L67 to I87, Y112 to V132, T172 to K192, C212 to V232, and F266 to V287.

This sequence belongs to the mitochondrial carrier (TC 2.A.29) family.

It localises to the mitochondrion inner membrane. Its function is as follows. Acts as a glutamate and glycine mitochondrial transmembrane transporter. The polypeptide is Glutamate/glycine mitochondrial carrier ymc1 (ymc1) (Schizosaccharomyces pombe (strain 972 / ATCC 24843) (Fission yeast)).